Here is a 354-residue protein sequence, read N- to C-terminus: Src kinase-associated phosphoprotein 1 (354 aa).

The PH domain occupies 107 to 210 (NVIKQGYLEK…WVDQISFLLK (104 aa)). 2 positions are modified to phosphotyrosine: Y142 and Y236. Phosphotyrosine; by FYN is present on residues Y267 and Y290. Positions 285-290 (RRRVDY) are interaction with FYB1. One can recognise an SH3 domain in the interval 289–350 (DYADYYQGLW…PKDYLTTAFE (62 aa)).

The protein belongs to the SKAP family. Homodimer. Interacts with FYN. Interacts with PTPRC. Interacts with GRB2 when phosphorylated on Tyr-267. Interacts with FYB1, which is required for SKAP2 protein stability. Part of a complex consisting of SKAP1, FYB1 and CLNK. Interacts with RASGRP1. Interacts with FYB2. In terms of processing, phosphorylated on tyrosines. Phosphorylation by FYN on Tyr-267 is required for GRB2 interaction. Phosphorylation by FYN on Tyr-290 abolishes interaction with FYB1. Tyr-236 is dephosphorylated by PTPRC. As to expression, expressed in mast cells (at protein level).

It localises to the cytoplasm. Its subcellular location is the nucleus. The protein resides in the cell membrane. Positively regulates T-cell receptor signaling by enhancing the MAP kinase pathway. Required for optimal conjugation between T-cells and antigen-presenting cells by promoting the clustering of integrin ITGAL on the surface of T-cells. May be involved in high affinity immunoglobulin epsilon receptor signaling in mast cells. This is Src kinase-associated phosphoprotein 1 (Skap1) from Rattus norvegicus (Rat).